Reading from the N-terminus, the 429-residue chain is Glutamate-1-semialdehyde 2,1-aminomutase 2 (429 aa).

Residue Lys-268 is modified to N6-(pyridoxal phosphate)lysine.

Belongs to the class-III pyridoxal-phosphate-dependent aminotransferase family. HemL subfamily. As to quaternary structure, homodimer. The cofactor is pyridoxal 5'-phosphate.

Its subcellular location is the cytoplasm. The catalysed reaction is (S)-4-amino-5-oxopentanoate = 5-aminolevulinate. It participates in porphyrin-containing compound metabolism; protoporphyrin-IX biosynthesis; 5-aminolevulinate from L-glutamyl-tRNA(Glu): step 2/2. The chain is Glutamate-1-semialdehyde 2,1-aminomutase 2 from Bacillus thuringiensis (strain Al Hakam).